The chain runs to 117 residues: UPF0122 protein Dred_2057 (117 aa).

This sequence belongs to the UPF0122 family.

Its function is as follows. Might take part in the signal recognition particle (SRP) pathway. This is inferred from the conservation of its genetic proximity to ftsY/ffh. May be a regulatory protein. This chain is UPF0122 protein Dred_2057, found in Desulforamulus reducens (strain ATCC BAA-1160 / DSM 100696 / MI-1) (Desulfotomaculum reducens).